Here is a 580-residue protein sequence, read N- to C-terminus: Protein O-linked-mannose beta-1,4-N-acetylglucosaminyltransferase 2 (580 aa).

Over 1-4 (MHLS) the chain is Cytoplasmic. The chain crosses the membrane as a helical; Signal-anchor for type II membrane protein span at residues 5-25 (AVLNALLVSVLAAVLWKHVRL). Residues 26–580 (REHAASLEEE…PFADVLVCST (555 aa)) lie on the Lumenal side of the membrane. 2 N-linked (GlcNAc...) asparagine glycosylation sites follow: Asn99 and Asn276. In terms of domain architecture, Fibronectin type-III spans 488–580 (ARCQASVQGA…PFADVLVCST (93 aa)).

The protein belongs to the glycosyltransferase 61 family.

The protein localises to the endoplasmic reticulum membrane. It carries out the reaction 3-O-(alpha-D-mannosyl)-L-threonyl-[protein] + UDP-N-acetyl-alpha-D-glucosamine = 3-O-(N-acetyl-beta-D-glucosaminyl-(1-&gt;4)-alpha-D-mannosyl)-L-threonyl-[protein] + UDP + H(+). The protein operates within protein modification; protein glycosylation. Functionally, O-linked mannose beta-1,4-N-acetylglucosaminyltransferase that transfers UDP-N-acetyl-D-glucosamine to the 4-position of the mannose to generate N-acetyl-D-glucosamine-beta-1,4-O-D-mannosylprotein. Involved in the biosynthesis of the phosphorylated O-mannosyl trisaccharide (N-acetylgalactosamine-beta-3-N-acetylglucosamine-beta-4-(phosphate-6-)mannose), a carbohydrate structure present in alpha-dystroglycan (DAG1), which is required for binding laminin G-like domain-containing extracellular proteins with high affinity. The polypeptide is Protein O-linked-mannose beta-1,4-N-acetylglucosaminyltransferase 2 (POMGNT2) (Bos taurus (Bovine)).